The chain runs to 593 residues: MLPAHKQTLEALLADSVAQVAHALKGADAEFVIPAITLERPKVAAHGDVACNVAMQLAKPLGTNPRQLAERIVAALVAQPAAQGLVDAAEIAGPGFINLRVSAAAKQAVIAAVFEQGRAFGTSQREKGKRVLVEFVSANPTGPLHVGHGRQAALGDVLANVIASQGYAVHREFYYNDAGVQIANLAISTQARARGLKPGDAGWPEAAYNGEYIADIARDYLNGATVAAKDGEPVTGARDIENLDAIRKFAVAYLRHEQDMDLQAFGVKFDQYYLESSLYSEGRVEKTVDALVKAGMTYEQDGALWLRTTDEGDDKDRVMRKSDGTYTYFVPDVAYHVTKWERGFTKVINIQGSDHHGTIARVRAGLQGLHIGIPKGYPDYVLHKMVTVMRDGQEVKLSKRAGSYVTVRDLIEWSGGAAPGQEAAPDMIDEATITRGRDAVRFFLISRKADTEFVFDIDLALKQNDENPVYYVQYAHARICSVLNELKARYNVDVAQLPGADLSQLTSPQAVSLMQKLAEYPDLLTHAANELAPHAVAFYLRDLAGEFHSFYNAERVLVDDEAPRNARAALLAATRQVLENGLAMLGVSAPAKM.

The 'HIGH' region signature appears at 138–148 (ANPTGPLHVGH).

The protein belongs to the class-I aminoacyl-tRNA synthetase family. As to quaternary structure, monomer.

Its subcellular location is the cytoplasm. It carries out the reaction tRNA(Arg) + L-arginine + ATP = L-arginyl-tRNA(Arg) + AMP + diphosphate. In Burkholderia vietnamiensis (strain G4 / LMG 22486) (Burkholderia cepacia (strain R1808)), this protein is Arginine--tRNA ligase.